Reading from the N-terminus, the 452-residue chain is GTPase Der (452 aa).

2 EngA-type G domains span residues 9 to 170 (KIIA…PEED) and 185 to 362 (LQIV…KTWN). Residues 15–22 (GRPNVGKS), 62–66 (DTPGL), 124–127 (NKCE), 191–198 (GRPNAGKS), 238–242 (DTAGL), and 303–306 (NKWD) each bind GTP. The 86-residue stretch at 363–448 (KKITTSKLNE…PIRFNYIKTK (86 aa)) folds into the KH-like domain.

It belongs to the TRAFAC class TrmE-Era-EngA-EngB-Septin-like GTPase superfamily. EngA (Der) GTPase family. In terms of assembly, associates with the 50S ribosomal subunit.

In terms of biological role, GTPase that plays an essential role in the late steps of ribosome biogenesis. This is GTPase Der from Rickettsia bellii (strain RML369-C).